Reading from the N-terminus, the 253-residue chain is Small ribosomal subunit protein uS2 (253 aa).

Serine 2 carries the N-acetylserine modification. Residues 212–253 (QQAAEEAAAGEEDDEAKEEVAAEEQTEAADWAEGQSEEVASW) form a disordered region. A compositionally biased stretch (acidic residues) spans 219 to 238 (AAGEEDDEAKEEVAAEEQTE).

This sequence belongs to the universal ribosomal protein uS2 family. Component of the small ribosomal subunit. Mature ribosomes consist of a small (40S) and a large (60S) subunit. The 40S subunit contains about 33 different proteins and 1 molecule of RNA (18S). The 60S subunit contains about 49 different proteins and 3 molecules of RNA (25S, 5.8S and 5S). Interacts with RPS21.

The protein resides in the cytoplasm. Functionally, required for the assembly and/or stability of the 40S ribosomal subunit. Required for the processing of the 20S rRNA-precursor to mature 18S rRNA in a late step of the maturation of 40S ribosomal subunits. This Eremothecium gossypii (strain ATCC 10895 / CBS 109.51 / FGSC 9923 / NRRL Y-1056) (Yeast) protein is Small ribosomal subunit protein uS2.